A 176-amino-acid polypeptide reads, in one-letter code: MAGKEVVILRIGHRPERDQRVTTHVALTGRALGACGMYLAASDKGVVQSVLDVAERWGGQFFCEDNIRWRTCIKDWKAAGGKVAHLTMYGINLPDIIEEIRPCEKLLVVVGAEKVPGEMYGLADYNVAVTGQPHSEIASLALFLDRYHDGREFAGEFPGAKIRIIPSRAGKQTEEL.

S-adenosyl-L-methionine contacts are provided by residues Leu-86 and 111–115; that span reads GAEKV.

The protein belongs to the aTrm56 family. In terms of assembly, homodimer.

Its subcellular location is the cytoplasm. It carries out the reaction cytidine(56) in tRNA + S-adenosyl-L-methionine = 2'-O-methylcytidine(56) in tRNA + S-adenosyl-L-homocysteine + H(+). In terms of biological role, specifically catalyzes the AdoMet-dependent 2'-O-ribose methylation of cytidine at position 56 in tRNAs. In Methanoregula boonei (strain DSM 21154 / JCM 14090 / 6A8), this protein is tRNA (cytidine(56)-2'-O)-methyltransferase.